Consider the following 67-residue polypeptide: uncharacterized protein (67 aa).

This is an uncharacterized protein from Saccharolobus islandicus (Sulfolobus islandicus).